A 557-amino-acid polypeptide reads, in one-letter code: Resveratrol cleavage oxygenase 1 (557 aa).

Positions 1 to 46 (MAILNDPPSSTTILSLHTPDVPPPSKPTPATTSHPQDSRNPRNLTS) are disordered. Residues tyrosine 144 and lysine 177 each coordinate piceatannol. Trans-resveratrol is bound by residues tyrosine 144 and lysine 177. 3 residues coordinate Fe cation: histidine 211, histidine 262, and histidine 334. Glutamate 404 provides a ligand contact to piceatannol. Residue glutamate 404 participates in trans-resveratrol binding. Histidine 523 lines the Fe cation pocket.

Belongs to the carotenoid oxygenase family. Fe(2+) serves as cofactor.

The enzyme catalyses trans-resveratrol + O2 = 3,5-dihydroxybenzaldehyde + 4-hydroxybenzaldehyde. It carries out the reaction piceatannol + O2 = 3,5-dihydroxybenzaldehyde + 3,4-dihydroxybenzaldehyde. Its function is as follows. Dioxygenase that cleaves the interphenyl C-alpha-C-beta double bond of resveratrol to yield 3,5-dihydroxybenzaldehyde and 4-hydroxybenzaldehyde. Also cleaves piceatannol, a compound that differs from resveratrol only in the occurrence of an additional hydroxyl group, which leads to the production of 3,4-dihydroxybenzaldehyde and 3,5-hydroxybenzaldehyde. The chain is Resveratrol cleavage oxygenase 1 from Botryotinia fuckeliana (strain B05.10) (Noble rot fungus).